The chain runs to 353 residues: Peptide methionine sulfoxide reductase MsrA/MsrB (353 aa).

The peptide methionine sulfoxide reductase A stretch occupies residues 43 to 196; it reads REIYLAGGCF…PNGYCHIDIT (154 aa). Residue Cys51 is part of the active site. In terms of domain architecture, MsrB spans 213–336; it reads DAELKAKLTP…NSASIKFIPL (124 aa). The Nucleophile role is filled by Cys325.

This sequence in the N-terminal section; belongs to the MsrA Met sulfoxide reductase family. In the C-terminal section; belongs to the MsrB Met sulfoxide reductase family.

It catalyses the reaction L-methionyl-[protein] + [thioredoxin]-disulfide + H2O = L-methionyl-(S)-S-oxide-[protein] + [thioredoxin]-dithiol. The enzyme catalyses [thioredoxin]-disulfide + L-methionine + H2O = L-methionine (S)-S-oxide + [thioredoxin]-dithiol. The catalysed reaction is L-methionyl-[protein] + [thioredoxin]-disulfide + H2O = L-methionyl-(R)-S-oxide-[protein] + [thioredoxin]-dithiol. Its function is as follows. Has an important function as a repair enzyme for proteins that have been inactivated by oxidation. Catalyzes the reversible oxidation-reduction of methionine sulfoxide in proteins to methionine. This Haemophilus influenzae (strain ATCC 51907 / DSM 11121 / KW20 / Rd) protein is Peptide methionine sulfoxide reductase MsrA/MsrB (msrAB).